A 364-amino-acid polypeptide reads, in one-letter code: Coproporphyrin III ferrochelatase (364 aa).

Fe-coproporphyrin III is bound by residues Arg-29 and Tyr-118. 2 residues coordinate Fe(2+): His-169 and Glu-250.

The protein belongs to the ferrochelatase family.

It localises to the cytoplasm. It catalyses the reaction Fe-coproporphyrin III + 2 H(+) = coproporphyrin III + Fe(2+). It participates in porphyrin-containing compound metabolism; protoheme biosynthesis. In terms of biological role, involved in coproporphyrin-dependent heme b biosynthesis. Catalyzes the insertion of ferrous iron into coproporphyrin III to form Fe-coproporphyrin III. This Streptococcus pneumoniae (strain Hungary19A-6) protein is Coproporphyrin III ferrochelatase.